The following is a 327-amino-acid chain: MTATKQHKKVILVGDGAVGSSYAFALVTQNIAQELGIIDIFKEKTQGDAEDLSHALAFTSPKKIYAADYSDCHDADLVVLTAGAPQKPGETRLDLVEKNLRINKEVVTQIVASGFKGIFLVAANPVDVLTYSTWKFSGFPKERVIGSGTSLDSARFRQALAAKIGVDARSVHAYIMGEHGDSEFAVWSHANVAGVGLYDWLQANRDIDEQGLVDLFISVRDAAYSIINKKGATFYGIAVALARITKAILDDENAVLPLSVFQEGQYEGVEDCYIGQPAIVGAYGIVRPVNIPLNDAELQKMQASANQLKAIIDEAFAKEEFASAAKN.

Residues V18, D39, K44, Y69, and 83 to 84 each bind NAD(+); that span reads GA. Residues Q86, R92, and 124-127 each bind substrate; that span reads NPVD. Residues 122-124 and S147 each bind NAD(+); that span reads AAN. 152–155 contributes to the substrate binding site; the sequence is DSAR. Positions 157 and 172 each coordinate beta-D-fructose 1,6-bisphosphate. H179 functions as the Proton acceptor in the catalytic mechanism. Residue Y224 is modified to Phosphotyrosine. A substrate-binding site is contributed by T233.

The protein belongs to the LDH/MDH superfamily. LDH family. Homotetramer.

It localises to the cytoplasm. The enzyme catalyses (S)-lactate + NAD(+) = pyruvate + NADH + H(+). It participates in fermentation; pyruvate fermentation to lactate; (S)-lactate from pyruvate: step 1/1. With respect to regulation, allosterically activated by fructose 1,6-bisphosphate (FBP). Catalyzes the conversion of lactate to pyruvate. This is L-lactate dehydrogenase from Streptococcus pyogenes serotype M3 (strain SSI-1).